Here is an 83-residue protein sequence, read N- to C-terminus: Short neurotoxin OKI-01/OKI-19 (83 aa).

Residues 1-21 form the signal peptide; the sequence is MKTLLLTLVVVTIVCLDLGYT. Disulfide bonds link C24/C45, C38/C62, C64/C75, and C76/C81.

The protein belongs to the three-finger toxin family. Short-chain subfamily. Type I alpha-neurotoxin sub-subfamily. As to expression, expressed by the venom gland.

It localises to the secreted. Functionally, binds to muscle nicotinic acetylcholine receptor (nAChR) and inhibit acetylcholine from binding to the receptor, thereby impairing neuromuscular transmission. This chain is Short neurotoxin OKI-01/OKI-19, found in Laticauda laticaudata (Blue-ringed sea krait).